Reading from the N-terminus, the 194-residue chain is Probable GTP-binding protein EngB (194 aa).

Residues Asp-22 to Glu-194 form the EngB-type G domain. GTP contacts are provided by residues Gly-30 to Ser-37, Gly-57 to Thr-61, Asp-75 to Gly-78, Thr-142 to Asp-145, and Phe-174 to Ser-176. Residues Ser-37 and Thr-59 each contribute to the Mg(2+) site.

It belongs to the TRAFAC class TrmE-Era-EngA-EngB-Septin-like GTPase superfamily. EngB GTPase family. It depends on Mg(2+) as a cofactor.

Functionally, necessary for normal cell division and for the maintenance of normal septation. The sequence is that of Probable GTP-binding protein EngB from Listeria monocytogenes serotype 4b (strain CLIP80459).